A 171-amino-acid polypeptide reads, in one-letter code: uncharacterized protein (171 aa).

Disordered regions lie at residues 1-41 (MDAV…SKPK) and 114-147 (DSLGNTASSSSMDPAKGVPSQSGPPEGLGLRPKR). Residues 27-38 (AQQQQGPSAQGS) show a composition bias toward low complexity. Polar residues predominate over residues 116-125 (LGNTASSSSM).

This is an uncharacterized protein from Mus musculus (Mouse).